A 313-amino-acid chain; its full sequence is WD repeat-containing protein 82 (313 aa).

WD repeat units lie at residues 19 to 58 (ENSD…PKRT), 105 to 144 (GHSK…CQGL), 146 to 184 (HLQG…KGPF), 192 to 231 (DRTC…VMHT), 236 to 276 (ANSK…KVAV), and 280 to 313 (KHTG…TIDD).

It belongs to the WD repeat SWD2 family. As to quaternary structure, component of the SET1/COMPASS complex, at least composed of the catalytic subunit (SETD1A or SETD1B), WDR5, WDR82, RBBP5, ASH2L/ASH2, CXXC1/CFP1, HCFC1 and DPY30. Component of the PNUTS-PP1 phosphatase complex, composed of PPP1R10/PNUTS, TOX4, WDR82, and PPP1CA or PPP1CB or PPP1CC. Associated with multiple protein complexes including an RNA polymerase II complex, MLL3/MLL4 complex and a chaperonin-containing TCP1 complex. Interacts with SETD1B (via N-terminal region); the interaction is direct. Interacts with SETD1A (via N-terminal region); the interaction is direct. Interacts with CUL4B. Interacts with RBBP5. Interacts with POLR2B. Interacts with hyperphosphorylated C-terminal domain (CTD) of RNA polymerase II large subunit (POLR2A). Binds specifically to CTD heptad repeats phosphorylated on 'Ser-5' of each heptad. SETD1A enhances its interaction with POLR2A. Interacts with PPP1R10/PNUTS. Interacts with PPP1CA in the presence of PPP1R10/PNUTS. Interacts with ZC3H4; interaction is independent of the SET1 complex and promotes transcription termination of long non-coding RNAs (lncRNAs).

The protein localises to the nucleus. Its subcellular location is the chromosome. It is found in the cytoplasm. Its function is as follows. Regulatory component of the SET1/COMPASS complex implicated in the tethering of this complex to transcriptional start sites of active genes. Facilitates histone H3 'Lys-4' methylation (H3K4me) via recruitment of the SETD1A or SETD1B to the 'Ser-5' phosphorylated C-terminal domain (CTD) of RNA polymerase II large subunit (POLR2A). Component of the PNUTS-PP1 protein phosphatase complex, a protein phosphatase 1 (PP1) complex that promotes RNA polymerase II transcription pause-release, allowing transcription elongation. PNUTS-PP1 also plays a role in the control of chromatin structure and cell cycle progression during the transition from mitosis into interphase. Together with ZC3H4, but independently of the SET1 complex, part of a transcription termination checkpoint that promotes transcription termination of long non-coding RNAs (lncRNAs). The transcription termination checkpoint is activated by the inefficiently spliced first exon of lncRNAs and promotes transcription termination of lncRNAs and their subsequent degradation by the exosome. The protein is WD repeat-containing protein 82 of Homo sapiens (Human).